The sequence spans 564 residues: Cytochrome P450 monooxygenase fsdH (564 aa).

The helical transmembrane segment at 18–38 threads the bilayer; it reads GSVSLAVLSTLAVVIAGWYIL. Residue Cys472 coordinates heme.

The protein belongs to the cytochrome P450 family. Heme is required as a cofactor.

It is found in the membrane. It participates in mycotoxin biosynthesis. Functionally, cytochrome P450 monooxygenase; part of the gene cluster that mediates the biosynthesis of fusaridione A, a bright yellow trans-fused decalin-containing tetramic acid with antimicrobial activity. The PKS module of fsdS catalyzes the formation of the polyketide unit which is then conjugated to L-tyrosine by the condensation domain of the fsdS NRPS module. Activity of the Dieckmann cyclase domain (RED) results in release of the intermediate fusaridione A. The unstable pyrrolidinedione ring of fusaridione A is opened through a reverse-Dieckmann reaction to afford its ring-opened form. The chain is Cytochrome P450 monooxygenase fsdH from Fusarium heterosporum.